Consider the following 374-residue polypeptide: Putative glutamate--cysteine ligase 2 (374 aa).

It belongs to the glutamate--cysteine ligase type 2 family. YbdK subfamily.

It catalyses the reaction L-cysteine + L-glutamate + ATP = gamma-L-glutamyl-L-cysteine + ADP + phosphate + H(+). Functionally, ATP-dependent carboxylate-amine ligase which exhibits weak glutamate--cysteine ligase activity. This is Putative glutamate--cysteine ligase 2 from Laribacter hongkongensis (strain HLHK9).